An 86-amino-acid chain; its full sequence is Protein YwqI (86 aa).

A coiled-coil region spans residues 57–83 (DYKKAVQKNIEDTKDNVDSLKEQDEAI).

This chain is Protein YwqI (ywqI), found in Bacillus subtilis (strain 168).